The following is a 187-amino-acid chain: Casparian strip membrane protein 5 (187 aa).

Residues 1-24 (MKSGQAEIVETSKGIQKSGLMSRR) are Cytoplasmic-facing. The helical transmembrane segment at 25-45 (IAILEFILRIVAFFNTIGSAI) threads the bilayer. The Extracellular portion of the chain corresponds to 46–74 (LMGTTHETLPFFTQFIRFQAEYNDLPALT). Residues 75 to 95 (FFVVANAVVSGYLIMSLTLAF) traverse the membrane as a helical segment. Residues 96-107 (VHIVKRKTQNTR) lie on the Cytoplasmic side of the membrane. The chain crosses the membrane as a helical span at residues 108-128 (ILLIVLDVAMLGLLSAGASSA). Over 129–161 (AAIVYLAHNGNNKTNWFAICQQFNSFCERISGS) the chain is Extracellular. N-linked (GlcNAc...) asparagine glycosylation occurs at asparagine 140. The chain crosses the membrane as a helical span at residues 162–182 (LIGSFIAVVLLILLILLSAIA). The Cytoplasmic segment spans residues 183–187 (LSRRH).

This sequence belongs to the Casparian strip membrane proteins (CASP) family. As to quaternary structure, homodimer and heterodimers.

It localises to the cell membrane. Functionally, regulates membrane-cell wall junctions and localized cell wall deposition. Required for establishment of the Casparian strip membrane domain (CSD) and the subsequent formation of Casparian strips, a cell wall modification of the root endodermis that determines an apoplastic barrier between the intraorganismal apoplasm and the extraorganismal apoplasm and prevents lateral diffusion. This chain is Casparian strip membrane protein 5, found in Arabidopsis lyrata subsp. lyrata (Lyre-leaved rock-cress).